Reading from the N-terminus, the 228-residue chain is NAD(P)H-hydrate epimerase (228 aa).

Positions 10-214 constitute a YjeF N-terminal domain; the sequence is AIDIDQELFN…DLERKYDLKI (205 aa). 58-62 contributes to the (6S)-NADPHX binding site; the sequence is NNGGD. The K(+) site is built by Asn59 and Asp123. (6S)-NADPHX contacts are provided by residues 127–133 and Asp156; that span reads GFSFKPP. Ser159 lines the K(+) pocket.

This sequence belongs to the NnrE/AIBP family. Requires K(+) as cofactor.

The catalysed reaction is (6R)-NADHX = (6S)-NADHX. It catalyses the reaction (6R)-NADPHX = (6S)-NADPHX. Catalyzes the epimerization of the S- and R-forms of NAD(P)HX, a damaged form of NAD(P)H that is a result of enzymatic or heat-dependent hydration. This is a prerequisite for the S-specific NAD(P)H-hydrate dehydratase to allow the repair of both epimers of NAD(P)HX. The sequence is that of NAD(P)H-hydrate epimerase from Pediculus humanus subsp. corporis (Body louse).